Reading from the N-terminus, the 142-residue chain is MKTFSAKPHEVKRDWYVIDATDKVLGRVASEVAHRLRGKHKPEFTPHVDTGDFIIVINAAKLRVTGAKTTDKKYYRHSGYPGGIYETTFGKMQQRFPGRALEKAVKGMLPKGPLGYAMIKKLKVYAEGSHPHEAQQPKALEI.

It belongs to the universal ribosomal protein uL13 family. As to quaternary structure, part of the 50S ribosomal subunit.

This protein is one of the early assembly proteins of the 50S ribosomal subunit, although it is not seen to bind rRNA by itself. It is important during the early stages of 50S assembly. The chain is Large ribosomal subunit protein uL13 from Ralstonia pickettii (strain 12J).